The following is a 398-amino-acid chain: tRNA-specific 2-thiouridylase MnmA (398 aa).

Residues 33-40 (GMSGGVDS) and Met59 contribute to the ATP site. The tract at residues 119–121 (NPD) is interaction with target base in tRNA. The active-site Nucleophile is the Cys124. A disulfide bridge connects residues Cys124 and Cys226. Gly148 contributes to the ATP binding site. An interaction with tRNA region spans residues 176-178 (KDQ). Cys226 acts as the Cysteine persulfide intermediate in catalysis. The interaction with tRNA stretch occupies residues 343-344 (RY).

The protein belongs to the MnmA/TRMU family.

It localises to the cytoplasm. The catalysed reaction is S-sulfanyl-L-cysteinyl-[protein] + uridine(34) in tRNA + AH2 + ATP = 2-thiouridine(34) in tRNA + L-cysteinyl-[protein] + A + AMP + diphosphate + H(+). Functionally, catalyzes the 2-thiolation of uridine at the wobble position (U34) of tRNA, leading to the formation of s(2)U34. This Psychrobacter sp. (strain PRwf-1) protein is tRNA-specific 2-thiouridylase MnmA.